The following is a 104-amino-acid chain: Large ribosomal subunit protein uL24 (104 aa).

The interval 82-104 (RVGYRFDENGKKVRVSRRNGKDI) is disordered. Residues 93-104 (KVRVSRRNGKDI) are compositionally biased toward basic residues.

Belongs to the universal ribosomal protein uL24 family. Part of the 50S ribosomal subunit.

One of two assembly initiator proteins, it binds directly to the 5'-end of the 23S rRNA, where it nucleates assembly of the 50S subunit. Its function is as follows. One of the proteins that surrounds the polypeptide exit tunnel on the outside of the subunit. This is Large ribosomal subunit protein uL24 from Corynebacterium glutamicum (strain R).